Here is a 92-residue protein sequence, read N- to C-terminus: C-C motif chemokine 3 (92 aa).

The N-terminal stretch at 1 to 19 (MKVPGAALAVLLCTMSLCS) is a signal peptide. Cystine bridges form between C33/C57 and C34/C73.

The protein belongs to the intercrine beta (chemokine CC) family. In terms of assembly, self-associates. Also heterodimer of MIP-1-alpha(4-69) and MIP-1-beta(3-69). Interacts with CCR1.

The protein resides in the secreted. In terms of biological role, monokine with inflammatory and chemokinetic properties. Binds to CCR1, CCR4 and CCR5. One of the major HIV-suppressive factors produced by CD8+ T-cells. Recombinant MIP-1-alpha induces a dose-dependent inhibition of different strains of HIV-1, HIV-2, and simian immunodeficiency virus (SIV). In Canis lupus familiaris (Dog), this protein is C-C motif chemokine 3 (CCL3).